A 196-amino-acid chain; its full sequence is Imidazoleglycerol-phosphate dehydratase (196 aa).

Belongs to the imidazoleglycerol-phosphate dehydratase family.

The protein localises to the cytoplasm. It carries out the reaction D-erythro-1-(imidazol-4-yl)glycerol 3-phosphate = 3-(imidazol-4-yl)-2-oxopropyl phosphate + H2O. The protein operates within amino-acid biosynthesis; L-histidine biosynthesis; L-histidine from 5-phospho-alpha-D-ribose 1-diphosphate: step 6/9. In Lachnoclostridium phytofermentans (strain ATCC 700394 / DSM 18823 / ISDg) (Clostridium phytofermentans), this protein is Imidazoleglycerol-phosphate dehydratase.